The primary structure comprises 795 residues: MAVPGSLAECGYIRTVLGQQILGHLDSSSLALPSEARLRLAGSSGRGDPAARSQRIQEQVQQTLARRGRSSAVSGNLHRTSSVPEYVYKLHVVENDFVGRQSPVTRDYDMLKAGMTATYGSRWGRAAAQYSSQKSVEERSWRQPLRRLEISPDSSPERAHYGHSEYQYAWRSHVVPGGRLTLPRYARSEILGLRQAGTARRPPGCGSFSDAVFDNGPLKPTMPTHPPGTSHSAGSLLEETTVRVSQARLQSTQSRTARSSWPRSSVRSSLREPGRMLTTAGQAAVGSGDAHGDRSVFADAQLGNADIEMTLERAVNMLDADHVPVSKISAAATFIQHESFQKSEARKRVNQLRGIPKLLQLLKLQNEDVQRAACGALRNLVFEDNDNKLEVAELNGVPRLLQVLKQTRDLETKKQITGLLWNLSSSDKLKHLMITEALLTLTESVIIPFSGWPEGDYPKANGLLDFDIFYNVTGCLRNMSSAGPDGRKMMRRCDGLIDSLVHYVRGTIADYQPDDKATENCVCILHNLSYQLEAELPEKYSQSIYMQNRNIQTNSNKSIGCFGSRSRKLKEQYQDLQMPEERSNPHGIEWLWHSIVIRMYLSLIAKSTRNYTQEASLGALQNLTAGGGPIPTLVARMVVQKENGLQHTRKMLHVGDPSVKKTAVSLLRNLSRNLSLQNEIAKETLPDLVSIIPDTVPSTDLLIETTASACYTLNNLMQNSYQNARDLLNTGGLQKIMTISIGEGYAPNKASKAASVLLYSLWAHTELHHAYKKAQFKKTDFVNSRTAKAYHSLKD.

The tract at residues M1 to L318 is required for binding to single-stranded DNA. The residue at position 44 (S44) is a Phosphoserine. R46 is modified (omega-N-methylarginine). Phosphoserine occurs at positions 82, 132, 135, 151, 154, 155, 172, 188, and 232. Disordered stretches follow at residues G197–A233 and S245–G274. Residues S245–A257 are compositionally biased toward polar residues. The segment covering R258–S268 has biased composition (low complexity). S265 and S287 each carry phosphoserine. ARM repeat units follow at residues D299–S339, S343–F382, N385–S425, P484–Y530, P585–A625, L633–R672, Q677–Q718, and Y721–A763.

This sequence belongs to the beta-catenin family. Interacts with DSC2. Interacts with JUP. Interacts with KRT5/CK5, KRT8/CK8, KRT14/CK14, KRT18/CK18 and VIM. Interacts (via N-terminus) with MARK3/C-TAK1. Interacts with DSP. Interacts with DSG1, DSG2 and DSG3. Interacts (via N-terminus) with CTNNB1. Interacts with CDH1. Interacts with the RNA polymerase III (Pol III) complex proteins POLR3A/RPC155, POLR3F/RPC39 and POLR3C/RPC82. Interacts with CTNNA3. Interacts (via N-terminus) with SCN5A/Nav1.5. Interacts with ANK3/ANKG and GJA1/CX43. In terms of tissue distribution, expressed in cardiomyocytes in the heart (at protein level).

It is found in the nucleus. It localises to the cell junction. The protein localises to the desmosome. Its subcellular location is the cytoplasm. Functionally, a component of desmosome cell-cell junctions which are required for positive regulation of cellular adhesion. Regulates focal adhesion turnover resulting in changes in focal adhesion size, cell adhesion and cell spreading, potentially via transcriptional modulation of beta-integrins. Required to maintain gingival epithelial barrier function. Important component of the desmosome that is also required for localization of desmosome component proteins such as DSC2, DSG2 and JUP to the desmosome cell-cell junction. Required for the formation of desmosome cell junctions in cardiomyocytes, thereby required for the correct formation of the heart, specifically trabeculation and formation of the atria walls. Loss of desmosome cell junctions leads to mis-localization of DSP and DSG2 resulting in disruption of cell-cell adhesion and disordered intermediate filaments. Modulates profibrotic gene expression in cardiomyocytes via regulation of DSP expression and subsequent activation of downstream TGFB1 and MAPK14/p38 MAPK signaling. Required for cardiac sodium current propagation and electrical synchrony in cardiac myocytes, via ANK3 stabilization and modulation of SCN5A/Nav1.5 localization to cell-cell junctions. Required for mitochondrial function, nuclear envelope integrity and positive regulation of SIRT3 transcription via maintaining DES localization at its nuclear envelope and cell tip anchoring points, and thereby preserving regulation of the transcriptional program. Maintenance of nuclear envelope integrity protects against DNA damage and transcriptional dysregulation of genes, especially those involved in the electron transport chain, thereby preserving mitochondrial function and protecting against superoxide radical anion generation. Binds single-stranded DNA (ssDNA). May regulate the localization of GJA1 to gap junctions in intercalated disks of the heart. The chain is Plakophilin-2 from Mus musculus (Mouse).